A 325-amino-acid chain; its full sequence is Olfactory receptor 6Y1 (325 aa).

Residues 1–30 are Extracellular-facing; it reads MTTIILEVDNHTVTTRFILLGFPTRPAFQL. A glycan (N-linked (GlcNAc...) asparagine) is linked at N10. A helical membrane pass occupies residues 31–51; it reads LFFSIFLATYLLTLLENLLII. At 52-59 the chain is on the cytoplasmic side; it reads LAIHSDGQ. Residues 60 to 80 traverse the membrane as a helical segment; the sequence is LHKPMYFFLSHLSFLEMWYVT. Over 81–104 the chain is Extracellular; that stretch reads VISPKMLVDFLSHDKSISFNGCMT. A disulfide bond links C102 and C194. A helical membrane pass occupies residues 105–125; the sequence is QLYFFVTFVCTEYILLAIMAF. At 126–144 the chain is on the cytoplasmic side; sequence DRYVAICNPLRYPVIMTNQ. Residues 145–165 traverse the membrane as a helical segment; sequence LCGTLAGGCWFCGLMTAMIKM. The Extracellular segment spans residues 166-202; it reads VFIAQLHYCGMPQINHYFCDISPLLNVSCEDASQAEM. N-linked (GlcNAc...) asparagine glycosylation occurs at N191. The helical transmembrane segment at 203-222 threads the bilayer; the sequence is VDFFLALMVIAIPLCVVVAS. Residues 223-242 are Cytoplasmic-facing; it reads YAAILATILRIPSAQGRQKA. Residues 243-263 traverse the membrane as a helical segment; it reads FSTCASHLTVVILFYSMTLFT. Residues 264 to 276 lie on the Extracellular side of the membrane; the sequence is YARPKLMYAYNSN. A helical membrane pass occupies residues 277 to 297; sequence KVVSVLYTVIVPLLNPIIYCL. The Cytoplasmic segment spans residues 298 to 325; the sequence is RNHEVKAALRKTIHCRGSGPQGNGAFSS.

The protein belongs to the G-protein coupled receptor 1 family.

The protein localises to the cell membrane. Its function is as follows. Odorant receptor. The sequence is that of Olfactory receptor 6Y1 (OR6Y1) from Homo sapiens (Human).